The sequence spans 177 residues: MASLMSNAAVVTASTAAQANMVAPFSGLKSTSAFPVSRKSNVDITSLATNGGRVNCMQVWPPRNLKKFETLSYLPTLSEESLLKEINYLLIKGWVPCLEFEVGPAHVYRENNKSPGYYDGRYWTMWKLPMFGCTDASQVAAEVVECKNAYPDAHVRIIGFDNKRQVQCISFIAYKPE.

The N-terminal 55 residues, 1–55 (MASLMSNAAVVTASTAAQANMVAPFSGLKSTSAFPVSRKSNVDITSLATNGGRVN), are a transit peptide targeting the chloroplast.

It belongs to the RuBisCO small chain family. In terms of assembly, heterohexadecamer of 8 large and 8 small subunits.

It is found in the plastid. It localises to the chloroplast. Its function is as follows. RuBisCO catalyzes two reactions: the carboxylation of D-ribulose 1,5-bisphosphate, the primary event in carbon dioxide fixation, as well as the oxidative fragmentation of the pentose substrate. Both reactions occur simultaneously and in competition at the same active site. Although the small subunit is not catalytic it is essential for maximal activity. This chain is Ribulose bisphosphate carboxylase small subunit, chloroplastic, found in Silene latifolia subsp. alba (White campion).